The chain runs to 253 residues: Ubiquinone biosynthesis O-methyltransferase (253 aa).

Arg-45, Gly-76, Asp-97, and Met-140 together coordinate S-adenosyl-L-methionine.

Belongs to the methyltransferase superfamily. UbiG/COQ3 family.

The catalysed reaction is a 3-demethylubiquinol + S-adenosyl-L-methionine = a ubiquinol + S-adenosyl-L-homocysteine + H(+). The enzyme catalyses a 3-(all-trans-polyprenyl)benzene-1,2-diol + S-adenosyl-L-methionine = a 2-methoxy-6-(all-trans-polyprenyl)phenol + S-adenosyl-L-homocysteine + H(+). Its pathway is cofactor biosynthesis; ubiquinone biosynthesis. Functionally, O-methyltransferase that catalyzes the 2 O-methylation steps in the ubiquinone biosynthetic pathway. The chain is Ubiquinone biosynthesis O-methyltransferase from Parvibaculum lavamentivorans (strain DS-1 / DSM 13023 / NCIMB 13966).